A 37-amino-acid chain; its full sequence is Potassium channel toxin alpha-KTx 3.13 (37 aa).

3 disulfides stabilise this stretch: Cys-7/Cys-27, Cys-13/Cys-32, and Cys-17/Cys-34. A Lysine amide modification is found at Lys-37.

The protein belongs to the short scorpion toxin superfamily. Potassium channel inhibitor family. Alpha-KTx 03 subfamily. Expressed by the venom gland.

Its subcellular location is the secreted. Blocks voltage-gated potassium channels Kv1.1/KCNA1 (IC(50)=203.15 pM), Kv1.2/KCNA2 (IC(50)=8.92 nM) from rat and human Kv1.3 KCNA3/KCNA3 (IC(50)=171 pM) potently. At 2 uM, also blocks Shaker IR and has a moderate effect on rat Kv1.6/KCNA6. The sequence is that of Potassium channel toxin alpha-KTx 3.13 from Mesobuthus eupeus (Lesser Asian scorpion).